A 304-amino-acid polypeptide reads, in one-letter code: uncharacterized protein (304 aa).

This is an uncharacterized protein from Acanthamoeba polyphaga (Amoeba).